The chain runs to 89 residues: Small ribosomal subunit protein uS15 (89 aa).

The protein belongs to the universal ribosomal protein uS15 family. As to quaternary structure, part of the 30S ribosomal subunit. Forms a bridge to the 50S subunit in the 70S ribosome, contacting the 23S rRNA.

Its function is as follows. One of the primary rRNA binding proteins, it binds directly to 16S rRNA where it helps nucleate assembly of the platform of the 30S subunit by binding and bridging several RNA helices of the 16S rRNA. Forms an intersubunit bridge (bridge B4) with the 23S rRNA of the 50S subunit in the ribosome. This is Small ribosomal subunit protein uS15 from Rhizobium etli (strain CIAT 652).